Here is a 780-residue protein sequence, read N- to C-terminus: ATP-dependent DNA helicase RecG (780 aa).

Domain regions lie at residues 1-350 (MLCS…GGIP), 351-549 (KKIE…EMPP), and 550-780 (GRKE…IEVG). The tract at residues 154–252 (RKIFKLNDLL…VTPKEGEYVR (99 aa)) is wedge domain. ATP contacts are provided by F367, L369, G399, S400, G401, K402, T403, and R436. A Helicase ATP-binding domain is found at 383–544 (DMISEKPMNR…FYGDLDVTVI (162 aa)). Positions 497 to 500 (DEQH) match the DEAH box motif. The Helicase C-terminal domain maps to 563–728 (RVNEVYEFVR…EYDLKTRGPG (166 aa)).

It belongs to the helicase family. RecG subfamily. Monomer.

It catalyses the reaction Couples ATP hydrolysis with the unwinding of duplex DNA by translocating in the 3'-5' direction.. The enzyme catalyses ATP + H2O = ADP + phosphate + H(+). Its function is as follows. Plays a critical role in recombination and DNA repair. Helps process Holliday junction intermediates to mature products by catalyzing branch migration. Has replication fork (Y-DNA) regression activity, unwinds stalled or blocked replication forks to make a HJ that can be resolved. Has a DNA unwinding activity characteristic of a DNA helicase with 3'-5' polarity. Might be a DNA translocase rather than a bona fide helicase. The sequence is that of ATP-dependent DNA helicase RecG from Thermotoga maritima (strain ATCC 43589 / DSM 3109 / JCM 10099 / NBRC 100826 / MSB8).